The primary structure comprises 380 residues: Cytochrome b (380 aa).

The next 4 helical transmembrane spans lie at 34–54, 78–99, 114–134, and 179–199; these read FGSL…LLAM, WLIR…YLHI, WNTG…GYVL, and FFAL…IHLT. Heme b contacts are provided by H84 and H98. Heme b is bound by residues H183 and H197. A ubiquinone is bound at residue H202. The next 4 helical transmembrane spans lie at 227–247, 289–309, 321–341, and 348–368; these read LKDI…ALFS, LGGV…PFLH, LSQL…WVGS, and FIII…ILFP.

The protein belongs to the cytochrome b family. The cytochrome bc1 complex contains 11 subunits: 3 respiratory subunits (MT-CYB, CYC1 and UQCRFS1), 2 core proteins (UQCRC1 and UQCRC2) and 6 low-molecular weight proteins (UQCRH/QCR6, UQCRB/QCR7, UQCRQ/QCR8, UQCR10/QCR9, UQCR11/QCR10 and a cleavage product of UQCRFS1). This cytochrome bc1 complex then forms a dimer. Heme b is required as a cofactor.

It is found in the mitochondrion inner membrane. Its function is as follows. Component of the ubiquinol-cytochrome c reductase complex (complex III or cytochrome b-c1 complex) that is part of the mitochondrial respiratory chain. The b-c1 complex mediates electron transfer from ubiquinol to cytochrome c. Contributes to the generation of a proton gradient across the mitochondrial membrane that is then used for ATP synthesis. This chain is Cytochrome b (MT-CYB), found in Macronectes giganteus (Southern giant petrel).